Consider the following 62-residue polypeptide: DNA gyrase inhibitor YacG (62 aa).

Zn(2+)-binding residues include C9, C12, C27, and C31. The span at 43 to 52 (GYRIPGEKAP) shows a compositional bias: basic and acidic residues. Residues 43-62 (GYRIPGEKAPESGGEEPGDE) are disordered.

It belongs to the DNA gyrase inhibitor YacG family. Interacts with GyrB. Zn(2+) serves as cofactor.

Its function is as follows. Inhibits all the catalytic activities of DNA gyrase by preventing its interaction with DNA. Acts by binding directly to the C-terminal domain of GyrB, which probably disrupts DNA binding by the gyrase. This is DNA gyrase inhibitor YacG from Geobacter sp. (strain M21).